A 348-amino-acid chain; its full sequence is Erlin-1 (348 aa).

Over 1–7 the chain is Cytoplasmic; that stretch reads MNMTQAR. The helical transmembrane segment at 8–28 threads the bilayer; the sequence is LLVAAVVGLVAILLYASIHKI. The Lumenal portion of the chain corresponds to 29 to 348; sequence EEGHLAVYYR…SPIQNKENAG (320 aa). An N-linked (GlcNAc...) asparagine glycan is attached at N108. K269 bears the N6-acetyllysine mark. The span at 318–336 shows a compositional bias: basic and acidic residues; sequence DGRTGREDSLPPEEAREPS. The interval 318–348 is disordered; that stretch reads DGRTGREDSLPPEEAREPSGESPIQNKENAG. Positions 339 to 348 are enriched in polar residues; sequence SPIQNKENAG.

The protein belongs to the band 7/mec-2 family. As to quaternary structure, forms a heteromeric complex with ERLIN2. In complex with ERLIN2, interacts with RNF170. Interacts with AMFR and SYVN1. Deubiquitinated by USP25; leading to stabilization.

It is found in the endoplasmic reticulum membrane. Functionally, component of the ERLIN1/ERLIN2 complex which mediates the endoplasmic reticulum-associated degradation (ERAD) of inositol 1,4,5-trisphosphate receptors (IP3Rs). Involved in regulation of cellular cholesterol homeostasis by regulation the SREBP signaling pathway. Binds cholesterol and may promote ER retention of the SCAP-SREBF complex. This is Erlin-1 from Mus musculus (Mouse).